Consider the following 125-residue polypeptide: Small ribosomal subunit protein uS12 (125 aa).

At Asp-89 the chain carries 3-methylthioaspartic acid.

It belongs to the universal ribosomal protein uS12 family. Part of the 30S ribosomal subunit. Contacts proteins S8 and S17. May interact with IF1 in the 30S initiation complex.

Functionally, with S4 and S5 plays an important role in translational accuracy. In terms of biological role, interacts with and stabilizes bases of the 16S rRNA that are involved in tRNA selection in the A site and with the mRNA backbone. Located at the interface of the 30S and 50S subunits, it traverses the body of the 30S subunit contacting proteins on the other side and probably holding the rRNA structure together. The combined cluster of proteins S8, S12 and S17 appears to hold together the shoulder and platform of the 30S subunit. In Clostridium kluyveri (strain ATCC 8527 / DSM 555 / NBRC 12016 / NCIMB 10680 / K1), this protein is Small ribosomal subunit protein uS12.